The sequence spans 122 residues: Large ribosomal subunit protein uL14 (122 aa).

This sequence belongs to the universal ribosomal protein uL14 family. As to quaternary structure, part of the 50S ribosomal subunit. Forms a cluster with proteins L3 and L19. In the 70S ribosome, L14 and L19 interact and together make contacts with the 16S rRNA in bridges B5 and B8.

In terms of biological role, binds to 23S rRNA. Forms part of two intersubunit bridges in the 70S ribosome. In Chlorobaculum tepidum (strain ATCC 49652 / DSM 12025 / NBRC 103806 / TLS) (Chlorobium tepidum), this protein is Large ribosomal subunit protein uL14.